Reading from the N-terminus, the 464-residue chain is Glycine receptor subunit alpha-3 (464 aa).

A signal peptide spans 1–33 (MAHVRHFRTLVSGFYFWEAALLLSLVATKETDS). Residues 34–255 (ARSRSAPMSP…RFHLERQMGY (222 aa)) are Extracellular-facing. Asparagine 71 is a glycosylation site (N-linked (GlcNAc...) asparagine). Cysteine 171 and cysteine 185 are joined by a disulfide. Zn(2+)-binding residues include glutamate 225 and aspartate 227. Cysteines 231 and 242 form a disulfide. Residue 235–240 (YNTGKF) participates in strychnine binding. Histidine 248 contacts Zn(2+). A helical transmembrane segment spans residues 256-277 (YLIQMYIPSLLIVILSWVSFWI). The Cytoplasmic portion of the chain corresponds to 278–282 (NMDAA). The chain crosses the membrane as a helical span at residues 283-303 (PARVALGITTVLTMTTQSSGS). Topologically, residues 304-314 (RASLPKVSYVK) are extracellular. The helical transmembrane segment at 315 to 335 (AIDIWMAVCLLFVFSALLEYA) threads the bilayer. At 336-430 (AVNFVSRQHK…FIDRAKKIDT (95 aa)) the chain is on the cytoplasmic side. 2 positions are modified to phosphoserine: serine 370 and serine 379. Residues 431–451 (ISRACFPLAFLIFNIFYWVIY) traverse the membrane as a helical segment. The Extracellular portion of the chain corresponds to 452-464 (KILRHEDIHQQQD).

The protein belongs to the ligand-gated ion channel (TC 1.A.9) family. Glycine receptor (TC 1.A.9.3) subfamily. GLRA3 sub-subfamily. As to quaternary structure, homopentamer (in vitro). Heteropentamer composed of GLRA3 and GLRB. Both homopentamers and heteropentamers form functional ion channels, but their characteristics are subtly different. Post-translationally, phosphorylated by PKA; this causes down-regulation of channel activity. Widely distributed throughout the central nervous system.

It is found in the postsynaptic cell membrane. Its subcellular location is the perikaryon. The protein localises to the cell projection. It localises to the dendrite. The protein resides in the synapse. It is found in the cell membrane. The enzyme catalyses chloride(in) = chloride(out). Functionally, glycine receptors are ligand-gated chloride channels. Channel opening is triggered by extracellular glycine. Channel characteristics depend on the subunit composition; heteropentameric channels display faster channel closure. Plays an important role in the down-regulation of neuronal excitability. Contributes to the generation of inhibitory postsynaptic currents. Contributes to increased pain perception in response to increased prostaglandin E2 levels. Plays a role in cellular responses to ethanol. The protein is Glycine receptor subunit alpha-3 (GLRA3) of Homo sapiens (Human).